Here is a 500-residue protein sequence, read N- to C-terminus: Perfringolysin O (500 aa).

The signal sequence occupies residues 1 to 28 (MIRFKKTKLIASIAMALCLFSQPVISFS). 4 beta stranded membrane passes run 189–202 (KSQISSALNVNAKV), 209–218 (VDFNAVANNE), 287–296 (SKDVQAAFKA), and 304–316 (KNSQQYKDIYENS). Positions 458–468 (ECTGLAWEWWR) match the Conserved undecapeptide motif. A Cholesterol binding motif is present at residues 490–491 (TL).

The protein belongs to the cholesterol-dependent cytolysin family. In terms of assembly, homooligomeric pore complex of 35 to 50 subunits; when inserted in the host membrane.

It localises to the secreted. The protein localises to the host cell membrane. Its function is as follows. A cholesterol-dependent toxin that causes cytolysis by forming pores in cholesterol containing host membranes. After binding to target membranes, the protein assembles into a pre-pore complex. A conformation change leads to insertion in the host membrane and formation of an oligomeric pore complex. Cholesterol is required for binding to host cell membranes, membrane insertion and pore formation; cholesterol binding is mediated by a Thr-Leu pair in the C-terminus. Can be reversibly inactivated by oxidation. The polypeptide is Perfringolysin O (pfo) (Clostridium perfringens (strain ATCC 13124 / DSM 756 / JCM 1290 / NCIMB 6125 / NCTC 8237 / Type A)).